Reading from the N-terminus, the 88-residue chain is Putative membrane protein insertion efficiency factor (88 aa).

The segment at 65 to 88 (LDFVPPKKDKNDDSGHTCKAHHHH) is disordered. Basic and acidic residues predominate over residues 69–80 (PPKKDKNDDSGH).

The protein belongs to the UPF0161 family.

It is found in the cell membrane. In terms of biological role, could be involved in insertion of integral membrane proteins into the membrane. In Listeria innocua serovar 6a (strain ATCC BAA-680 / CLIP 11262), this protein is Putative membrane protein insertion efficiency factor.